The following is a 363-amino-acid chain: Phosphoserine aminotransferase (363 aa).

R42 lines the L-glutamate pocket. Residues 76–77 (GR), W102, T156, D175, and Q198 each bind pyridoxal 5'-phosphate. K199 carries the N6-(pyridoxal phosphate)lysine modification. 240-241 (NT) contributes to the pyridoxal 5'-phosphate binding site.

The protein belongs to the class-V pyridoxal-phosphate-dependent aminotransferase family. SerC subfamily. Homodimer. Pyridoxal 5'-phosphate serves as cofactor.

It localises to the cytoplasm. It carries out the reaction O-phospho-L-serine + 2-oxoglutarate = 3-phosphooxypyruvate + L-glutamate. The catalysed reaction is 4-(phosphooxy)-L-threonine + 2-oxoglutarate = (R)-3-hydroxy-2-oxo-4-phosphooxybutanoate + L-glutamate. Its pathway is amino-acid biosynthesis; L-serine biosynthesis; L-serine from 3-phospho-D-glycerate: step 2/3. It functions in the pathway cofactor biosynthesis; pyridoxine 5'-phosphate biosynthesis; pyridoxine 5'-phosphate from D-erythrose 4-phosphate: step 3/5. Its function is as follows. Catalyzes the reversible conversion of 3-phosphohydroxypyruvate to phosphoserine and of 3-hydroxy-2-oxo-4-phosphonooxybutanoate to phosphohydroxythreonine. This is Phosphoserine aminotransferase from Shewanella sp. (strain W3-18-1).